The sequence spans 179 residues: Signal peptidase complex catalytic subunit SEC11A (179 aa).

Residues 1–16 (MLSLDFLDDVRRMNKR) are Cytoplasmic-facing. Residues 17–36 (QLYYQVLNFGMIVSSALMIW) form a helical; Signal-anchor for type II membrane protein membrane-spanning segment. Residues 37–179 (KGLMLITGSE…LGLFVLVHRE (143 aa)) lie on the Lumenal side of the membrane. Catalysis depends on charge relay system residues Ser56, His96, and Asp122. Residues 165 to 176 (AVLFLLGLFVLV) are C-terminal short (CTS) helix.

This sequence belongs to the peptidase S26B family. As to quaternary structure, component of the signal peptidase complex paralog A (SPC-A) composed of a catalytic subunit SEC11A and three accessory subunits SPCS1, SPCS2 and SPCS3. Within the complex, interacts with SPCS2 and SPCS3. The complex induces a local thinning of the ER membrane which is used to measure the length of the signal peptide (SP) h-region of protein substrates. This ensures the selectivity of the complex towards h-regions shorter than 18-20 amino acids.

It localises to the endoplasmic reticulum membrane. The enzyme catalyses Cleavage of hydrophobic, N-terminal signal or leader sequences from secreted and periplasmic proteins.. In terms of biological role, catalytic component of the signal peptidase complex (SPC) which catalyzes the cleavage of N-terminal signal sequences from nascent proteins as they are translocated into the lumen of the endoplasmic reticulum. Specifically cleaves N-terminal signal peptides that contain a hydrophobic alpha-helix (h-region) shorter than 18-20 amino acids. This Rattus norvegicus (Rat) protein is Signal peptidase complex catalytic subunit SEC11A (Sec11a).